The chain runs to 237 residues: Sugar fermentation stimulation protein homolog (237 aa).

Belongs to the SfsA family.

The protein is Sugar fermentation stimulation protein homolog of Pseudomonas putida (strain W619).